The following is a 402-amino-acid chain: Olfactomedin-like protein 1 (402 aa).

The signal sequence occupies residues 1–28 (MMVALPGASASLVLFLAAFLPPLQHAQD). The N-linked (GlcNAc...) asparagine glycan is linked to N66. Residues 73–135 (RCQTHTNEYR…EAEEEKKIRT (63 aa)) adopt a coiled-coil conformation. Residues N138 and N183 are each glycosylated (N-linked (GlcNAc...) asparagine). The region spanning 140 to 397 (SCDNMLMAIK…QIIYKLQTKK (258 aa)) is the Olfactomedin-like domain. C141 and C324 are joined by a disulfide.

In terms of processing, highly N-glycosylated.

The protein resides in the secreted. The chain is Olfactomedin-like protein 1 (Olfml1) from Rattus norvegicus (Rat).